The primary structure comprises 248 residues: MVMMRDVWVNWFEGEENGYNVCPFHEWRSEDRIEVLDQVKLLKVDEKLMDYIEDQLLDLPMELLKEVFQKSYLRKNMSRIQLDYCFIATDGKRIIAVDTMGYKTPIRKSRLTPRQEQVVFETLTEQDVPYFQLEIPLPAKDYHLLSPSPAELAGLTRKERQLKQLLLMVLDQLQTTGSDAEIKYWCTEWDPLTYKKLQQKGRTEVWEQLLNGVRAGWSQRHYKLCEAMVKGHSFFEKLWELEHPERVK.

The protein belongs to the UPF0736 family.

The protein is UPF0736 protein ABC2536 of Shouchella clausii (strain KSM-K16) (Alkalihalobacillus clausii).